Here is a 218-residue protein sequence, read N- to C-terminus: Ribose-5-phosphate isomerase A (218 aa).

Residues Thr28–Thr31, Asp81–Asp84, and Lys94–Gly97 each bind substrate. Residue Glu103 is the Proton acceptor of the active site. A substrate-binding site is contributed by Lys121.

It belongs to the ribose 5-phosphate isomerase family. Homodimer.

The catalysed reaction is aldehydo-D-ribose 5-phosphate = D-ribulose 5-phosphate. It participates in carbohydrate degradation; pentose phosphate pathway; D-ribose 5-phosphate from D-ribulose 5-phosphate (non-oxidative stage): step 1/1. Its function is as follows. Catalyzes the reversible conversion of ribose-5-phosphate to ribulose 5-phosphate. The polypeptide is Ribose-5-phosphate isomerase A (Shewanella piezotolerans (strain WP3 / JCM 13877)).